The primary structure comprises 254 residues: MYQPLLLLPLLLTSAFATPHDPTTHQALEKRASFPIPSSKGSVTYSSPKTISGTFDGGLKTYGRGVKCTGQKEGGEKDAVFVLEDGATLKNAIIGADQIEGVYCKGSCTIQNVWWTDVCEDALSLKGTGSGTHRIIGGGARNADDKVIQHNSGGKVIIQDFTVQNFGKLYRACGNCSKQFKRTVEISGVKASSGKALVGINSNYGDTATISGCASSVKEICVEYEGTDNNKKEPAKKSSGPSNACKYKEPLASC.

Positions Met-1 to Ala-17 are cleaved as a signal peptide. Asn-175 carries an N-linked (GlcNAc...) asparagine glycan. A disordered region spans residues Asp-228 to Cys-254.

Belongs to the polysaccharide lyase 3 family. Ca(2+) is required as a cofactor.

It localises to the secreted. It catalyses the reaction Eliminative cleavage of (1-&gt;4)-alpha-D-galacturonan to give oligosaccharides with 4-deoxy-alpha-D-galact-4-enuronosyl groups at their non-reducing ends.. In terms of biological role, pectinolytic enzyme consist of four classes of enzymes: pectin lyase, polygalacturonase, pectin methylesterase and rhamnogalacturonase. Among pectinolytic enzymes, pectin lyase is the most important in depolymerization of pectin, since it cleaves internal glycosidic bonds of highly methylated pectins. Favors pectate, the anion, over pectin, the methyl ester. The sequence is that of Probable pectate lyase E (plyE) from Aspergillus fumigatus (strain ATCC MYA-4609 / CBS 101355 / FGSC A1100 / Af293) (Neosartorya fumigata).